A 196-amino-acid polypeptide reads, in one-letter code: MLTIGVLGLQGAVREHIRSIEACGAAGKVIKWPEELKEIDGLILPGGESTTMRRLIDTYQFMKPLQEFAASGKPVFGTCAGLIILAKNIAGTNDAHLGVLDVTVERNSFGRQVDSFEADLTVKGLEGPFTGVFIRAPHILEAGADVEVLSEHNGRIVAAKQGNLLGCSFHPELTDDHRMTKLFVEMVEKHKREAVV.

47 to 49 (GES) lines the L-glutamine pocket. Cys-79 serves as the catalytic Nucleophile. L-glutamine-binding positions include Arg-106 and 134 to 135 (IR). Active-site charge relay system residues include His-170 and Glu-172.

Belongs to the glutaminase PdxT/SNO family. In the presence of PdxS, forms a dodecamer of heterodimers. Only shows activity in the heterodimer.

The enzyme catalyses aldehydo-D-ribose 5-phosphate + D-glyceraldehyde 3-phosphate + L-glutamine = pyridoxal 5'-phosphate + L-glutamate + phosphate + 3 H2O + H(+). The catalysed reaction is L-glutamine + H2O = L-glutamate + NH4(+). Its pathway is cofactor biosynthesis; pyridoxal 5'-phosphate biosynthesis. Catalyzes the hydrolysis of glutamine to glutamate and ammonia as part of the biosynthesis of pyridoxal 5'-phosphate. The resulting ammonia molecule is channeled to the active site of PdxS. The protein is Pyridoxal 5'-phosphate synthase subunit PdxT of Bacillus licheniformis (strain ATCC 14580 / DSM 13 / JCM 2505 / CCUG 7422 / NBRC 12200 / NCIMB 9375 / NCTC 10341 / NRRL NRS-1264 / Gibson 46).